We begin with the raw amino-acid sequence, 130 residues long: Transcription antitermination protein NusB (130 aa).

This sequence belongs to the NusB family.

In terms of biological role, involved in transcription antitermination. Required for transcription of ribosomal RNA (rRNA) genes. Binds specifically to the boxA antiterminator sequence of the ribosomal RNA (rrn) operons. In Geobacillus kaustophilus (strain HTA426), this protein is Transcription antitermination protein NusB.